We begin with the raw amino-acid sequence, 375 residues long: Fluoride export protein 1 (375 aa).

The Cytoplasmic portion of the chain corresponds to 1–11 (MIFNPVISNHK). Residues 12–32 (LSHYIHVFCTFTTFCILGTET) form a helical membrane-spanning segment. Topologically, residues 33–34 (RQ) are extracellular. The chain crosses the membrane as a helical span at residues 35 to 55 (AITALSTYTPAFVTAPTVLWS). At 56–79 (NCSSCMLMGIMQSLNAYTWMKDHQ) the chain is on the cytoplasmic side. A helical transmembrane segment spans residues 80-100 (VLFLGVTTGYCGALSSFSSML). The Extracellular segment spans residues 101 to 127 (LEMFEHSTNLTNGNIANHTKLPNRAYG). N-linked (GlcNAc...) asparagine glycosylation is found at N109 and N117. The chain crosses the membrane as a helical span at residues 128–148 (IMEFLSVLLVHLMVSMGSLIF). Over 149 to 213 (GRQLGKEVIV…FKKFFDIVDK (65 aa)) the chain is Cytoplasmic. The chain crosses the membrane as a helical span at residues 214–234 (LAYALAFPLIILFVVLCAYYE). N235 carries N-linked (GlcNAc...) asparagine glycosylation. Residues 235-241 (NYSRGKW) are Extracellular-facing. The chain crosses the membrane as a helical span at residues 242–262 (TLPCLFGIFAGFLRYWLAEMF). Topologically, residues 263–268 (NKTNKK) are cytoplasmic. Residues 269–289 (FPLGTFLANVFATLLIGIFTM) traverse the membrane as a helical segment. Residues 290-310 (VQRGKKHFSTDVPIVNSLNSC) are Extracellular-facing. A helical transmembrane segment spans residues 311-331 (HIVSALISGFCGTLSTISTFI). At 332-338 (NEGYKLS) the chain is on the cytoplasmic side. Residues 339-359 (FINMLIYYTVSIAISYCLLVI) form a helical membrane-spanning segment. The Extracellular portion of the chain corresponds to 360–375 (TLGSYAWTRGLTNPIC).

It belongs to the fluoride channel Fluc/FEX (TC 1.A.43) family.

Its subcellular location is the cell membrane. The catalysed reaction is fluoride(in) = fluoride(out). Its function is as follows. Fluoride channel required for the rapid expulsion of cytoplasmic fluoride. This is Fluoride export protein 1 from Saccharomyces cerevisiae (strain ATCC 204508 / S288c) (Baker's yeast).